Consider the following 196-residue polypeptide: Zinc metalloproteinase-disintegrin-like bothrojarin-3 (196 aa).

The Disintegrin domain occupies 2–88; sequence PPVCGTELLE…DCPTDDIQRN (87 aa). 5 residues coordinate Ca(2+): valine 4, leucine 9, glutamate 11, glutamate 14, and aspartate 17. Disulfide bonds link cysteine 5–cysteine 34, cysteine 16–cysteine 29, cysteine 18–cysteine 24, cysteine 28–cysteine 51, cysteine 42–cysteine 48, cysteine 47–cysteine 73, cysteine 60–cysteine 80, cysteine 67–cysteine 99, cysteine 92–cysteine 104, cysteine 111–cysteine 161, cysteine 126–cysteine 168, cysteine 139–cysteine 149, and cysteine 156–cysteine 193. The D/ECD-tripeptide motif lies at 66–68; sequence ECD.

Belongs to the venom metalloproteinase (M12B) family. P-III subfamily. P-IIIa sub-subfamily. In terms of assembly, monomer. Zn(2+) serves as cofactor. Glycosylated. As to expression, expressed by the venom gland.

It localises to the secreted. Its function is as follows. The hemorrhagic metalloproteinase-disintegrin-like bothrojarin-1 is a potent inhibitor of collagen-induced platelet aggregation by blockage of alpha-2/beta-1 (ITGA2/ITGB1) integrin. It does not present any fibrinogen-clotting activity. The chain is Zinc metalloproteinase-disintegrin-like bothrojarin-3 from Bothrops jararaca (Jararaca).